The following is a 372-amino-acid chain: Alanine racemase (372 aa).

K36 (proton acceptor; specific for D-alanine) is an active-site residue. K36 carries the N6-(pyridoxal phosphate)lysine modification. R134 contacts substrate. Catalysis depends on Y266, which acts as the Proton acceptor; specific for L-alanine. M314 is a binding site for substrate.

The protein belongs to the alanine racemase family. The cofactor is pyridoxal 5'-phosphate.

It carries out the reaction L-alanine = D-alanine. Its pathway is amino-acid biosynthesis; D-alanine biosynthesis; D-alanine from L-alanine: step 1/1. In terms of biological role, catalyzes the interconversion of L-alanine and D-alanine. May also act on other amino acids. This Nitratidesulfovibrio vulgaris (strain DSM 19637 / Miyazaki F) (Desulfovibrio vulgaris) protein is Alanine racemase (alr).